The following is a 474-amino-acid chain: GTPase Der (474 aa).

2 EngA-type G domains span residues phenylalanine 3–arginine 167 and leucine 204–asparagine 379. GTP-binding positions include glycine 9–serine 16, aspartate 56–leucine 60, asparagine 119–glutamate 122, glycine 210–serine 217, aspartate 257–methionine 261, and asparagine 322–aspartate 325. In terms of domain architecture, KH-like spans lysine 380 to glutamate 464.

Belongs to the TRAFAC class TrmE-Era-EngA-EngB-Septin-like GTPase superfamily. EngA (Der) GTPase family. Associates with the 50S ribosomal subunit.

Functionally, GTPase that plays an essential role in the late steps of ribosome biogenesis. The protein is GTPase Der of Allorhizobium ampelinum (strain ATCC BAA-846 / DSM 112012 / S4) (Agrobacterium vitis (strain S4)).